We begin with the raw amino-acid sequence, 130 residues long: Cytochrome b-c1 complex subunit 7 (130 aa).

The protein belongs to the UQCRB/QCR7 family. In terms of assembly, component of the ubiquinol-cytochrome c oxidoreductase (cytochrome b-c1 complex, complex III, CIII), a multisubunit enzyme composed of 3 respiratory subunits cytochrome b, cytochrome c1 and Rieske protein, 2 core protein subunits, and additional low-molecular weight protein subunits. The complex exists as an obligatory dimer and forms supercomplexes (SCs) in the inner mitochondrial membrane with cytochrome c oxidase (complex IV, CIV).

The protein localises to the mitochondrion inner membrane. Component of the ubiquinol-cytochrome c oxidoreductase, a multisubunit transmembrane complex that is part of the mitochondrial electron transport chain which drives oxidative phosphorylation. The respiratory chain contains 3 multisubunit complexes succinate dehydrogenase (complex II, CII), ubiquinol-cytochrome c oxidoreductase (cytochrome b-c1 complex, complex III, CIII) and cytochrome c oxidase (complex IV, CIV), that cooperate to transfer electrons derived from NADH and succinate to molecular oxygen, creating an electrochemical gradient over the inner membrane that drives transmembrane transport and the ATP synthase. The cytochrome b-c1 complex catalyzes electron transfer from ubiquinol to cytochrome c, linking this redox reaction to translocation of protons across the mitochondrial inner membrane, with protons being carried across the membrane as hydrogens on the quinol. In the process called Q cycle, 2 protons are consumed from the matrix, 4 protons are released into the intermembrane space and 2 electrons are passed to cytochrome c. The sequence is that of Cytochrome b-c1 complex subunit 7 (UBCRBP) from Echinococcus multilocularis (Fox tapeworm).